Reading from the N-terminus, the 162-residue chain is MPETDFEEKMILIRRTARMQAGGRRFRFGALVVVGDRQGRVGLGFGKAPEVPLAVQKAGYYARRNMVEVPLQNGTIPHEIEVEFGASKIVLKPAAPGTGVIAGAVPRAILELAGVTDILTKELGSRNPINIAYATMEALRQLRTKADVERLRKGEAHAQAQG.

The S5 DRBM domain occupies 7–70 (EEKMILIRRT…YARRNMVEVP (64 aa)).

It belongs to the universal ribosomal protein uS5 family. Part of the 30S ribosomal subunit. Contacts proteins S4 and S8.

With S4 and S12 plays an important role in translational accuracy. Its function is as follows. Located at the back of the 30S subunit body where it stabilizes the conformation of the head with respect to the body. The polypeptide is Small ribosomal subunit protein uS5 (rpsE) (Thermus thermophilus (strain ATCC BAA-163 / DSM 7039 / HB27)).